The sequence spans 275 residues: Transmembrane protein 45A (275 aa).

5 consecutive transmembrane segments (helical) span residues 7–27 (HALPGTFFFIIGLWWCTKSIL), 51–71 (ILEGITIVGMALTGMAGEQFI), 100–120 (FFFGLLGVADILCFTISSLPV), 150–170 (IFVHQLLVLVVFLTGLVAFLE), and 218–238 (ILFLTICFCWHYAVTIVIVGM).

The protein belongs to the TMEM45 family.

The protein localises to the membrane. This chain is Transmembrane protein 45A (TMEM45A), found in Homo sapiens (Human).